A 355-amino-acid polypeptide reads, in one-letter code: 3-isopropylmalate dehydrogenase (355 aa).

Substrate is bound by residues arginine 90, arginine 100, arginine 128, and aspartate 222. Positions 222, 246, and 250 each coordinate Mg(2+). 280 to 292 (GSAPDIAGKGIAN) contributes to the NAD(+) binding site.

The protein belongs to the isocitrate and isopropylmalate dehydrogenases family. LeuB type 1 subfamily. As to quaternary structure, homodimer. Mg(2+) serves as cofactor. It depends on Mn(2+) as a cofactor.

The protein resides in the cytoplasm. It catalyses the reaction (2R,3S)-3-isopropylmalate + NAD(+) = 4-methyl-2-oxopentanoate + CO2 + NADH. It participates in amino-acid biosynthesis; L-leucine biosynthesis; L-leucine from 3-methyl-2-oxobutanoate: step 3/4. Functionally, catalyzes the oxidation of 3-carboxy-2-hydroxy-4-methylpentanoate (3-isopropylmalate) to 3-carboxy-4-methyl-2-oxopentanoate. The product decarboxylates to 4-methyl-2 oxopentanoate. The chain is 3-isopropylmalate dehydrogenase from Burkholderia thailandensis (strain ATCC 700388 / DSM 13276 / CCUG 48851 / CIP 106301 / E264).